The sequence spans 467 residues: Transcriptional modulator WTM2 (467 aa).

The span at 1–12 (MAKSKSSQGASG) shows a compositional bias: low complexity. 2 disordered regions span residues 1–22 (MAKSKSSQGASGARRKPAPSLY) and 84–121 (TFYDDDDDDDNDDDDEEGNGKTKSAATPNPEYGDAFQD). Over residues 87-100 (DDDDDDDNDDDDEE) the composition is skewed to acidic residues. 3 WD repeats span residues 244–282 (PGTNVAHSVRFFNNHLFASCSDDNILRFWDTRTADKPLW), 287–327 (PKNG…LATT), and 349–389 (SGGD…SRND).

In terms of biological role, transcriptional modulator with roles in meiotic regulation and silencing. The sequence is that of Transcriptional modulator WTM2 (WTM2) from Saccharomyces cerevisiae (strain ATCC 204508 / S288c) (Baker's yeast).